Reading from the N-terminus, the 311-residue chain is Tricarboxylate transport protein, mitochondrial (311 aa).

The propeptide at 1–13 is removed in mature form; the sequence is MAAPRAPRALTAA. Solcar repeat units follow at residues 23–111, 122–208, and 218–303; these read THPG…LSNH, RRGL…LRNW, and MNPL…VVKL. Helical transmembrane passes span 29-46, 86-105, and 129-143; these read ILAG…TFPT, GLSS…FGMF, and LGAG…VCPM. Position 156 is a phosphoserine (S156). The next 3 helical transmembrane spans lie at 183 to 202, 224 to 241, and 278 to 297; these read GLTA…FFVM, GVFG…NTPL, and GTVP…FVIY.

The protein belongs to the mitochondrial carrier (TC 2.A.29) family. Post-translationally, possesses a short cleavable presequence, which, however, is found to be dispensable both for targeting to mitochondria and insertion into the inner membrane. However, the presequence is required to keep SLC25A1 in a soluble state and thus in an import-competent state. Mature SLC25A1 lacking the presequence is prone to aggregation.

The protein localises to the mitochondrion inner membrane. The enzyme catalyses (S)-malate(in) + citrate(out) = (S)-malate(out) + citrate(in). It carries out the reaction citrate(out) + succinate(in) = citrate(in) + succinate(out). It catalyses the reaction D-threo-isocitrate(in) + citrate(out) = D-threo-isocitrate(out) + citrate(in). The catalysed reaction is cis-aconitate(in) + citrate(out) = cis-aconitate(out) + citrate(in). The enzyme catalyses trans-aconitate(in) + citrate(out) = trans-aconitate(out) + citrate(in). It carries out the reaction phosphoenolpyruvate(in) + citrate(out) = phosphoenolpyruvate(out) + citrate(in). It catalyses the reaction maleate(in) + citrate(out) = maleate(out) + citrate(in). In terms of biological role, mitochondrial electroneutral antiporter that exports citrate from the mitochondria into the cytosol in exchange for malate. Also able to mediate the exchange of citrate for isocitrate, phosphoenolpyruvate, cis-aconitate and to a lesser extent trans-aconitate, maleate and succinate. In the cytoplasm, citrate plays important roles in fatty acid and sterol synthesis, regulation of glycolysis, protein acetylation, and other physiopathological processes. The protein is Tricarboxylate transport protein, mitochondrial (Slc25a1) of Rattus norvegicus (Rat).